The primary structure comprises 614 residues: V-type proton ATPase catalytic subunit A isoform 2 (614 aa).

Serine 142 carries the post-translational modification Phosphoserine. An ATP-binding site is contributed by 247 to 254 (GAFGCGKT).

It belongs to the ATPase alpha/beta chains family. In terms of assembly, V-ATPase is a heteromultimeric enzyme made up of two complexes: the ATP-hydrolytic V1 complex and the proton translocation V0 complex. The V1 complex consists of three catalytic AB heterodimers that form a heterohexamer, three peripheral stalks each consisting of EG heterodimers, one central rotor including subunits D and F, and the regulatory subunits C and H. The proton translocation complex V0 consists of the proton transport subunit a, a ring of proteolipid subunits c9c'', rotary subunit d, subunits e and f, and the accessory subunits VhaAC45 and ATP6AP2.

It carries out the reaction ATP + H2O + 4 H(+)(in) = ADP + phosphate + 5 H(+)(out). ATP hydrolysis occurs at the interface between the nucleotide-binding domains of subunits A and B. ATP hydrolysis triggers a conformational change in the subunits D and F, which induces a shift of subunit d. The c-ring is subsequently rotated and results in a continuous proton translocation across the membrane. Functionally, catalytic subunit of the V1 complex of vacuolar(H+)-ATPase (V-ATPase), a multisubunit enzyme composed of a peripheral complex (V1) that hydrolyzes ATP and a membrane integral complex (V0) that translocates protons. V-ATPase is responsible for acidifying and maintaining the pH of intracellular compartments and in some cell types, is targeted to the plasma membrane, where it is responsible for acidifying the extracellular environment. This is V-type proton ATPase catalytic subunit A isoform 2 (Vha68-2) from Drosophila melanogaster (Fruit fly).